Here is a 241-residue protein sequence, read N- to C-terminus: Acetoacetyl-CoA reductase (241 aa).

NADP(+) contacts are provided by residues 12–14 (RGI) and 82–86 (NAGIT). Residues aspartate 88 and 141 to 144 (QMGQ) each bind substrate. Tyrosine 147 acts as the Proton acceptor in catalysis. 177–180 (PGYI) contacts NADP(+). 178–179 (GY) is a substrate binding site.

Belongs to the short-chain dehydrogenases/reductases (SDR) family.

Its subcellular location is the cytoplasm. It carries out the reaction a (3R)-3-hydroxyacyl-CoA + NADP(+) = a 3-oxoacyl-CoA + NADPH + H(+). Its pathway is biopolymer metabolism; poly-(R)-3-hydroxybutanoate biosynthesis. This Shinella zoogloeoides (Crabtreella saccharophila) protein is Acetoacetyl-CoA reductase.